The primary structure comprises 469 residues: Probable NADPH:adrenodoxin oxidoreductase, mitochondrial (469 aa).

The N-terminal 38 residues, 1-38 (MLSRFIKRTYSTQTSSPVVGIIGSGPAAFYTAHRLLRN), are a transit peptide targeting the mitochondrion. 4 residues coordinate FAD: alanine 27, glutamate 48, leucine 56, and valine 92. NADP(+)-binding positions include 164–167 (HGNV), 208–209 (RR), and glutamate 220. FAD-binding positions include tryptophan 375 and 382-384 (GVI). Glycine 382 serves as a coordination point for NADP(+).

The protein belongs to the ferredoxin--NADP reductase type 1 family. FAD serves as cofactor.

The protein localises to the mitochondrion inner membrane. It carries out the reaction 2 reduced [adrenodoxin] + NADP(+) + H(+) = 2 oxidized [adrenodoxin] + NADPH. In terms of biological role, adrenodoxin reductase transfers electrons from NADPH to adrenodoxin, which is involved in heme A biosynthesis and in iron-sulfur cluster assembly. Involved in the electron transfer to heme A synthase etp1(cd), a heme protein that catalyzes the conversion of heme O to heme A. Required for the de novo synthesis of Fe-S clusters on iron sulfur cluster assembly protein isu1. Involved in electron delivery for Fe-S cluster synthesis. Essential for coenzyme Q biosynthesis. May be involved in the electron transfer required for the hydroxylation reaction performed by coq6. May play a role in cellular and mitochondrial iron homeostasis. The sequence is that of Probable NADPH:adrenodoxin oxidoreductase, mitochondrial (arh1) from Schizosaccharomyces pombe (strain 972 / ATCC 24843) (Fission yeast).